The following is a 1283-amino-acid chain: Rab11 family-interacting protein 1 (1283 aa).

One can recognise a C2 domain in the interval 1-126 (MSLMVSAGRG…DQGRRKTQWY (126 aa)). Residues 161–185 (SMKDKSRNPFGKLKDKIKGKNKDSG) are compositionally biased toward basic and acidic residues. Residues 161 to 281 (SMKDKSRNPF…VMSHKRTAST (121 aa)) are disordered. Phosphoserine is present on residues S184, S202, S206, and S234. The span at 225–239 (NLQKTPLSQSMSVLP) shows a compositional bias: polar residues. Residues 257–266 (WDEDDNEDES) show a composition bias toward acidic residues. Residues S300, S315, S339, S341, S343, S345, S356, S357, and S382 each carry the phosphoserine modification. Disordered regions lie at residues 330–727 (EAKG…QEVP), 741–782 (VGEL…ASVP), 835–913 (PQEL…LFRM), 969–993 (DERI…KSST), and 1037–1141 (ASVT…RVEN). The span at 419 to 433 (ATKEAKESKKPESRR) shows a compositional bias: basic and acidic residues. S435 is modified (phosphoserine). The segment covering 442 to 451 (GKKDVAKGSE) has biased composition (basic and acidic residues). S477 carries the phosphoserine modification. Over residues 482 to 491 (DLVRRSEKDT) the composition is skewed to basic and acidic residues. 2 positions are modified to phosphoserine: S529 and S545. A compositionally biased stretch (low complexity) spans 588-612 (SSESPSVFSSLSSPIAAPISTSTPI). The span at 637-652 (QTESLTPVPNSGSSAL) shows a compositional bias: polar residues. Basic and acidic residues predominate over residues 698-715 (ETGRQEEELPRFPCKKQD). S758 carries the post-translational modification Phosphoserine. Positions 855 to 866 (ESPHAEDSERES) are enriched in basic and acidic residues. A compositionally biased stretch (acidic residues) spans 975–986 (VEDDGDQVEDDG). Positions 1037 to 1048 (ASVTAPSEQTTE) are enriched in polar residues. A compositionally biased stretch (basic and acidic residues) spans 1116 to 1131 (SDTHHTSTAESQKKAT). S1135 is modified (phosphoserine). Positions 1211 to 1273 (KKYSPSDPAF…EETPNILRIP (63 aa)) constitute an FIP-RBD domain. The interval 1219 to 1283 (AFAYAQLTHD…TQVGKKAGKM (65 aa)) is necessary for interaction with RAB4A and RAB11A, subcellular location and endosomal recycling.

As to quaternary structure, interacts with RAB11A (GTP-bound form); the interaction induces RAB11FIP1 recruitment to membranes. Interacts with RAB14 (GTP-bound form). Homooligomer. Isoform 2 interacts with RAB4A, RAB11A, RAB11B and RAB25. According to PubMed:15280022, RAB4A binding to RAB11FIP1 is of very low affinity in vitro and in vivo. As to expression, isoform 2 is expressed in brain, heart, testis, lung, spleen, ovary and small intestine.

Its subcellular location is the recycling endosome. It localises to the cytoplasmic vesicle. It is found in the phagosome membrane. Functionally, a Rab11 effector protein involved in the endosomal recycling process. Also involved in controlling membrane trafficking along the phagocytic pathway and in phagocytosis. Interaction with RAB14 may function in the process of neurite formation. In Homo sapiens (Human), this protein is Rab11 family-interacting protein 1.